A 255-amino-acid polypeptide reads, in one-letter code: Ornithine decarboxylase antizyme (255 aa).

Belongs to the ODC antizyme family. In terms of assembly, interacts with ODC and thereby sterically blocks ODC homodimerization.

Its function is as follows. Ornithine decarboxylase (ODC) antizyme protein that negatively regulates ODC activity and intracellular polyamine biosynthesis in response to increased intracellular polyamine levels. Binds to ODC monomers, inhibiting the assembly of the functional ODC homodimer, and targets the monomers for ubiquitin-independent proteolytic destruction by the 26S proteasome. The polypeptide is Ornithine decarboxylase antizyme (OAZ1) (Eremothecium gossypii (strain ATCC 10895 / CBS 109.51 / FGSC 9923 / NRRL Y-1056) (Yeast)).